A 695-amino-acid polypeptide reads, in one-letter code: Cysteine-rich receptor-like protein kinase 6 (695 aa).

The first 31 residues, 1–31 (MRRHRPYLDGVAAAAATFLLAVLLHAPLAAG), serve as a signal peptide directing secretion. The Extracellular portion of the chain corresponds to 32–294 (EDEPPPWVLC…ATSGEKTKNR (263 aa)). Gnk2-homologous domains follow at residues 38–142 (WVLC…NRDF) and 151–261 (TTYT…VFPF). Asparagine 49, asparagine 53, asparagine 70, and asparagine 101 each carry an N-linked (GlcNAc...) asparagine glycan. Disulfide bonds link cysteine 96/cysteine 105 and cysteine 108/cysteine 133. Asparagine 178 is a glycosylation site (N-linked (GlcNAc...) asparagine). 2 disulfides stabilise this stretch: cysteine 215/cysteine 224 and cysteine 227/cysteine 252. A helical transmembrane segment spans residues 295 to 315 (IGTVLAIVMPAIAAILLMVVA). Over 316–695 (CFCCWKRIKK…DLSITELVPR (380 aa)) the chain is Cytoplasmic. The Protein kinase domain occupies 363-634 (FADTKMIGQG…PTISSVNIML (272 aa)). ATP is bound by residues 369–377 (IGQGGFGMV) and lysine 391. The active-site Proton acceptor is the aspartate 488. Residues 658 to 682 (DSSNPYSERYPRPRHSGYSDNSTVV) are disordered.

It belongs to the protein kinase superfamily. Ser/Thr protein kinase family. CRK subfamily.

It localises to the membrane. Functionally, involved in disease resistance. Required for NPR1/NH1-mediated immunity to the bacterial blight pathogen Xanthomomas oryzae pv. oryzae (Xoo). Required for the benzothiadiazole (BTH)-induced immune response. Possesses kinase activity in vitro. This chain is Cysteine-rich receptor-like protein kinase 6, found in Oryza sativa subsp. japonica (Rice).